Here is a 387-residue protein sequence, read N- to C-terminus: Ferrochelatase (387 aa).

Histidine 196 and glutamate 277 together coordinate Fe cation.

The protein belongs to the ferrochelatase family.

Its subcellular location is the cytoplasm. The catalysed reaction is heme b + 2 H(+) = protoporphyrin IX + Fe(2+). It functions in the pathway porphyrin-containing compound metabolism; protoheme biosynthesis; protoheme from protoporphyrin-IX: step 1/1. Catalyzes the ferrous insertion into protoporphyrin IX. In Cyanothece sp. (strain PCC 7425 / ATCC 29141), this protein is Ferrochelatase.